The chain runs to 938 residues: Isoleucine--tRNA ligase (938 aa).

The short motif at 58–68 (PYANGNIHIGH) is the 'HIGH' region element. Glutamate 561 contributes to the L-isoleucyl-5'-AMP binding site. A 'KMSKS' region motif is present at residues 602–606 (KMSKS). Lysine 605 is a binding site for ATP. Cysteine 901, cysteine 904, cysteine 921, and cysteine 924 together coordinate Zn(2+).

It belongs to the class-I aminoacyl-tRNA synthetase family. IleS type 1 subfamily. In terms of assembly, monomer. Zn(2+) is required as a cofactor.

It is found in the cytoplasm. The enzyme catalyses tRNA(Ile) + L-isoleucine + ATP = L-isoleucyl-tRNA(Ile) + AMP + diphosphate. Functionally, catalyzes the attachment of isoleucine to tRNA(Ile). As IleRS can inadvertently accommodate and process structurally similar amino acids such as valine, to avoid such errors it has two additional distinct tRNA(Ile)-dependent editing activities. One activity is designated as 'pretransfer' editing and involves the hydrolysis of activated Val-AMP. The other activity is designated 'posttransfer' editing and involves deacylation of mischarged Val-tRNA(Ile). This is Isoleucine--tRNA ligase from Yersinia pseudotuberculosis serotype O:1b (strain IP 31758).